An 854-amino-acid polypeptide reads, in one-letter code: Protein unc-33 (854 aa).

Disordered regions lie at residues Glu57–Pro114, Glu130–Gly327, and Val794–Trp854. 2 stretches are compositionally biased toward polar residues: residues Thr58 to Gly68 and Arg75 to Arg97. Residues Lys193–Pro202 are compositionally biased toward basic and acidic residues. The segment covering Val240 to Gln257 has biased composition (acidic residues). Over residues His279–Asn298 the composition is skewed to basic and acidic residues. Residues Ser802–Asn811 show a composition bias toward polar residues. Residues Asn816–Val827 show a composition bias toward basic and acidic residues.

This sequence belongs to the metallo-dependent hydrolases superfamily. Hydantoinase/dihydropyrimidinase family. In terms of assembly, isoform a: Probable monomer. Isoform b: Probable homodimer. Isoform c: Probable homodimer. Probable heterodimer composed of isoform b and isoform c. Interacts with unc-14 and kinesin-1 motor complex light chain klc-1; both interactions regulate unc-33 neurite localization. Interacts with fln-1 (via calponin-homology (CH) domains and filamin repeat 18-19). Isoform c: Interacts with vab-8 isoform a. As to expression, expressed in ventral cord and nerve ring (at protein level). Isoform a: Expressed in nerve ring (at protein level). Expressed in the nervous system, two amphid socket cells and weakly in non-neuronal pharyngeal cells.

The protein resides in the cell projection. It is found in the axon. It localises to the dendrite. Functionally, during neurogenesis, plays an essential role in axonal guidance and outgrowth by regulating the polarization of both microtubule and actin cytoskeletons. Establishes the asymmetry of axonal and dendrite microtubules and the polarized sorting of neuronal proteins. This is achieved in part by regulating the localization of kinesin-like protein unc-104. In neurons without a distal microtubule-organizing center (MTOC), also controls the organization of microtubules in dendrites. During the dorso-ventral axonal guidance and outgrowth of VD neurons, required downstream of Rac GTPases ced-10 and mig-2 to inhibit growth cone filopodial protrusion mediated by the unc-6/netrin receptor unc-40-unc-5. Specifically, regulates growth cone filopodial protrusion polarity, and thus migration, by promoting F-actin polarization and by restricting plus-end microtubule accumulation in the growth cone. Probably downstream of mab-20/Sema2a and mab-20 receptor plx-2, regulates the guidance of DD/VD neuron axons by modulating fln-1 interaction with F-actin which results in the remodeling of the actin cytoskeleton. In hermaphrodites, involved in sex myoblast (SM) migration by regulating the gonad-dependent repulsion of SMs. Its function is as follows. In neurons, required for the polarized sorting of axonal proteins. In PLM neuron, regulates innexin unc-9 gap junction turnover by suppressing unc-9 transport out of gap junctions. Plays a role in locomotion and egg-laying. In terms of biological role, in PLM neuron, regulates innexin unc-9 gap junction turnover by suppressing unc-9 transport out of gap junctions. The protein is Protein unc-33 of Caenorhabditis elegans.